Reading from the N-terminus, the 674-residue chain is DNA ligase (674 aa).

NAD(+)-binding positions include 35–39 (DYDFD), 84–85 (SL), and glutamate 118. Lysine 120 (N6-AMP-lysine intermediate) is an active-site residue. NAD(+)-binding residues include arginine 141, glutamate 184, lysine 297, and lysine 321. 4 residues coordinate Zn(2+): cysteine 415, cysteine 418, cysteine 433, and cysteine 439. The BRCT domain occupies 598–674 (LVNTNFEGLT…ITEDEFDALL (77 aa)).

This sequence belongs to the NAD-dependent DNA ligase family. LigA subfamily. The cofactor is Mg(2+). Requires Mn(2+) as cofactor.

The catalysed reaction is NAD(+) + (deoxyribonucleotide)n-3'-hydroxyl + 5'-phospho-(deoxyribonucleotide)m = (deoxyribonucleotide)n+m + AMP + beta-nicotinamide D-nucleotide.. In terms of biological role, DNA ligase that catalyzes the formation of phosphodiester linkages between 5'-phosphoryl and 3'-hydroxyl groups in double-stranded DNA using NAD as a coenzyme and as the energy source for the reaction. It is essential for DNA replication and repair of damaged DNA. In Chlorobium phaeovibrioides (strain DSM 265 / 1930) (Prosthecochloris vibrioformis (strain DSM 265)), this protein is DNA ligase.